Here is an 823-residue protein sequence, read N- to C-terminus: Mitochondrial intermediate peptidase 2 (823 aa).

A mitochondrion-targeting transit peptide spans 1 to 33 (MRRLQQSLRRRSARRCPFILIPHRLLTTSYASY). Residues 532-553 (IDGDGLPEDWDKPYGPGLEADK) are disordered. His-595 is a binding site for Zn(2+). The active site involves Glu-596. Residues His-599 and His-602 each coordinate Zn(2+).

The protein belongs to the peptidase M3 family. Zn(2+) is required as a cofactor.

Its subcellular location is the mitochondrion matrix. The enzyme catalyses Release of an N-terminal octapeptide as second stage of processing of some proteins imported into the mitochondrion.. Cleaves proteins, imported into the mitochondrion, to their mature size. While most mitochondrial precursor proteins are processed to the mature form in one step by mitochondrial processing peptidase (MPP), the sequential cleavage by MIP of an octapeptide after initial processing by MPP is a required step for a subgroup of nuclear-encoded precursor proteins destined for the matrix or the inner membrane. This chain is Mitochondrial intermediate peptidase 2 (OCT2), found in Cryptococcus neoformans var. neoformans serotype D (strain B-3501A) (Filobasidiella neoformans).